The following is a 458-amino-acid chain: Cysteine--tRNA ligase (458 aa).

C29 lines the Zn(2+) pocket. A 'HIGH' region motif is present at residues 31–41 (MTVYDLCHLGH). The Zn(2+) site is built by C213, H238, and E242. Positions 270-274 (KMSKS) match the 'KMSKS' region motif. K273 provides a ligand contact to ATP.

Belongs to the class-I aminoacyl-tRNA synthetase family. As to quaternary structure, monomer. It depends on Zn(2+) as a cofactor.

The protein localises to the cytoplasm. The catalysed reaction is tRNA(Cys) + L-cysteine + ATP = L-cysteinyl-tRNA(Cys) + AMP + diphosphate. This chain is Cysteine--tRNA ligase, found in Acidovorax ebreus (strain TPSY) (Diaphorobacter sp. (strain TPSY)).